We begin with the raw amino-acid sequence, 429 residues long: Adenylosuccinate synthetase (429 aa).

GTP-binding positions include 12–18 (GDEGKGK) and 40–42 (GHT). Aspartate 13 functions as the Proton acceptor in the catalytic mechanism. Residues aspartate 13 and glycine 40 each contribute to the Mg(2+) site. IMP contacts are provided by residues 13–16 (DEGK), 38–41 (NAGH), threonine 128, arginine 142, glutamine 223, threonine 238, and arginine 302. Catalysis depends on histidine 41, which acts as the Proton donor. 298 to 304 (TTTGRPR) is a substrate binding site. GTP contacts are provided by residues arginine 304, 330-332 (SID), and 412-414 (SVG).

This sequence belongs to the adenylosuccinate synthetase family. As to quaternary structure, homodimer. The cofactor is Mg(2+).

Its subcellular location is the cytoplasm. The catalysed reaction is IMP + L-aspartate + GTP = N(6)-(1,2-dicarboxyethyl)-AMP + GDP + phosphate + 2 H(+). It participates in purine metabolism; AMP biosynthesis via de novo pathway; AMP from IMP: step 1/2. Functionally, plays an important role in the de novo pathway of purine nucleotide biosynthesis. Catalyzes the first committed step in the biosynthesis of AMP from IMP. This is Adenylosuccinate synthetase from Bacillus thuringiensis (strain Al Hakam).